The sequence spans 582 residues: MKPSDDKAQLSGLAQSEESSLDVDHQSFPCSPSIQPVASGCTHTENSAAYFLWPTSNLQHCAAEGRANYFGNLQKGLLPRHPGRLPKGQQANSLLDLMTIRAFHSKILRRFSLGTAVGFRIRKGDLTDIPAILVFVARKVHKKWLNPAQCLPAILEGPGGVWCDVDVVEFSYYGAPAQTPKEQMFSELVDKLCGSDECIGSGSQVASHETFGTLGAIVKRRTGNKQVGFLTNHHVAVDLDYPNQKMFHPLPPNLGPGVYLGAVERATSFITDDVWYGIYAGTNPETFVRADGAFIPFADDFDISTVTTVVRGVGDIGDVKVIDLQCPLNSLIGRQVCKVGRSSGHTTGTVMAYALEYNDEKGICFFTDILVVGENRQTFDLEGDSGSLIILTSQDGEKPRPIGIIWGGTANRGRLKLTSDHGPENWTSGVDLGRLLDRLELDIIITNESLQDAVQQQRFALVAAVTSAVGESSGVPVAIPEEKIEEIFEPLGIQIQQLPRHDVAASGTEGEEASNTVVNVEEHQFISNFVGMSPVRDDQDAPRSITNLNNPSEEELAMSLHLGDREPKRLRSDSGSSLDLEK.

2 disordered regions span residues Met1 to Gln26 and Gly531 to Lys582. The span at Leu562 to Ser572 shows a compositional bias: basic and acidic residues. Residues Pro567–Asp573 carry the Nuclear localization signal motif. The span at Asp573–Lys582 shows a compositional bias: low complexity.

Expressed in leaf sheaths, leaf blades, culms and panicles. Preferentially expressed in vascular tissues in leaves and culms.

It is found in the nucleus. The protein localises to the nucleoplasm. The protein resides in the cytoplasm. Its function is as follows. Involved in the regulation of lateral leaf growth. May be involved in the regulation of basipetal polar auxin transport (PAT) and vascular patterning in leaves. Controls photosynthesis rate by regulating carboxylation efficiency and consequently photosynthesis rate. Controls panicle and spikelet numbers, and grain yield. The sequence is that of Protein NARROW LEAF 1 from Oryza sativa subsp. japonica (Rice).